Here is a 232-residue protein sequence, read N- to C-terminus: Replicative helicase loading/DNA remodeling protein DnaD (232 aa).

Positions 1 to 98 are N-terminal domain; it reads MKKQQFIDMQ…QNGIKFEKYS (98 aa). A DDBH1 region spans residues 1 to 116; that stretch reads MKKQQFIDMQ…YEYIQLAQNQ (116 aa). Positions 99-205 are C-terminal domain; it reads LQPLWGKLYE…VEQAKIHSQK (107 aa). Residues 131-200 form a DDBH2 region; the sequence is TIFEEEFARP…NGLKTVEQAK (70 aa). The tract at residues 206–232 is C-terminal tail; that stretch reads FRRVQAKQNEPQKEYKRQVPFYNWLEQ.

The protein belongs to the DnaB/DnaD family. The DNA replisome assembles sequentially on oriC in this order; DnaA, DnaD, DnaB, DnaI-DnaC helicase. Homodimer. Homotetramer. Oligomerization in vitro is concentration dependent. Part of the replication restart primosome which assembles in this order; PriA, DnaD then DnaB. The preferred DNA substrate mimics an arrested DNA replication fork with unreplicated lagging strand. Interacts with DnaA, DnaB and PriA. Interaction with DnaB requires DnaD to dimerize.

The protein localises to the cytoplasm. With respect to regulation, recruitment to oriC requires DnaA but not DnaB, DnaC or DnaI and is blocked by SirA. Its function is as follows. Required to load replicative helicase DnaC onto replication forks. Binds to a DnaD recognition element (DRE) which has pairs of 5'-TnnT-3' motifs; there is a strong DRE at oriC opposite the DnaA-trios recognized by DnaA. During DNA replication from the origin of replication (oriC) in the DNA replisome, DnaD is required after DnaA, before DnaB and subsequent helicase DnaC loading. A component of the replication restart primosome, which reloads the replicative helicase on sites other than oriC. DnaB, DnaD and DnaI may also be required for a PriA-independent pathway of replication fork restart. DnaB and DnaD work together to allow DnaB access to single-stranded (ss)DNA. Has DNA remodeling activity that converts supercoiled plasmid into an open circular form; DnaD forms scaffolds inside the plasmid DNA. Plasmid relaxation incorporates both wrapping around the DnaD protein scaffold and simultaneous untwisting, no nicking of the DNA is seen. Also converts linear DNA into an open circular form. Disrupts a replicative helicase-DnaI complex. Inhibits the ability of DnaA-ATP to form a helix on DNA; does not disassemble preformed helices in vitro. Binds ssDNA, and replication fork-like substrates, supercoiled plasmid, but not stably to short double-stranded (ds)DNA. DnaD stimulates DnaB DNA-binding activities. DnaB and DnaD are required to load helicase on the repN plasmid origin of replication (oriN). Causes a severe growth defect upon overexpression even in an oriC-independent strain. This chain is Replicative helicase loading/DNA remodeling protein DnaD, found in Bacillus subtilis (strain 168).